The following is a 151-amino-acid chain: Transcription antitermination protein NusB (151 aa).

It belongs to the NusB family.

Functionally, involved in transcription antitermination. Required for transcription of ribosomal RNA (rRNA) genes. Binds specifically to the boxA antiterminator sequence of the ribosomal RNA (rrn) operons. This chain is Transcription antitermination protein NusB, found in Thermodesulfovibrio yellowstonii (strain ATCC 51303 / DSM 11347 / YP87).